A 1043-amino-acid polypeptide reads, in one-letter code: Ras guanine nucleotide exchange factor S (1043 aa).

Positions 109–142 (IETLQTQRRQSTLNIQALQINNELQQQLQQQQQL) form a coiled coil. Low complexity-rich tracts occupy residues 135–145 (QLQQQQQLPPI), 245–258 (LSPLLNGGASGLSS), 266–281 (SKNQLNSSSGSNNSSS), and 293–307 (NNNNSSGNQSASNSS). Disordered stretches follow at residues 135 to 160 (QLQQQQQLPPIDQLPPPPTSTSTSTI) and 245 to 316 (LSPL…HQSQ). Residues 404–434 (LAVSLQNVEGLQNIAENLEDETLNLLDLVNE) adopt a coiled-coil conformation. Residues 645–768 (KDGSILKVTL…LLRGLLDKMI (124 aa)) enclose the N-terminal Ras-GEF domain. Positions 803 to 1043 (SAQSIAQQLT…YDLSIALEPK (241 aa)) constitute a Ras-GEF domain.

Promotes the exchange of Ras-bound GDP by GTP. In Dictyostelium discoideum (Social amoeba), this protein is Ras guanine nucleotide exchange factor S (gefS).